The following is an 82-amino-acid chain: Delta-ctenitoxin-Pn2a (82 aa).

The N-terminal stretch at 1–17 (MKVAILFLSILVLAVAS) is a signal peptide. The propeptide occupies 18 to 34 (ESIEESRDDFAVEELGR). Intrachain disulfides connect cysteine 37/cysteine 51, cysteine 44/cysteine 57, cysteine 48/cysteine 80, cysteine 50/cysteine 65, and cysteine 59/cysteine 63.

It belongs to the neurotoxin 03 (Tx2) family. 06 subfamily. In terms of tissue distribution, expressed by the venom gland.

It is found in the secreted. Toxin that is known to potentiate erectile function. It binds voltage-dependently to sodium channels (Nav), inhibits the inactivation of the activated channels and decreases the peak inward current. The toxin delays inactivation of Nav1.2/SCN2A, Nav1.3/SCN3A, Nav1.4/SCN4A and Nav1.8/SCN10A, slows the inactivation process and decreases the sodium peak amplitude of Nav1.5/SCN5A and Nav1.6/SCN8A. In vivo, it enhances erectile function by inducing the release of nictric oxide (NO): it slows the sodium current, leading to depolarization, which leads to an increase in calcium influx (probably via activation of N-type calcium channels) which in turn activates neuronal NO synthase (nNOS/NOS1), inducing nitric oxide (NO) production. In a final step, NO activates soluble guanylate cyclase (GUCY1A1/GUCY1B1) which in turn increases cGMP formation, resulting in penile erection. It is noteworthy that the toxin does not provoke erection by inhibiting phosphodiesterase type 5 (PDE5A), an enzyme that hydrolysis cGMP. In vivo, it also causes scratching, lacrimation, hypersalivation, sweating and agitation followed by spastic paralysis of the anterior and posterior extremities and death at dose levels of 0.79 mg/mouse. It is insecticidal to the larval and adult forms of the house fly. The toxin also improves cavernosal relaxation in different models where erectile dysfunction is observed, such as deoxycorticosterone-acetate (DOCA)-salt hypertensive rats, mice models for type-1 diabetes, as well as elderly rats. The protein is Delta-ctenitoxin-Pn2a of Phoneutria nigriventer (Brazilian armed spider).